The chain runs to 285 residues: Pyrroline-5-carboxylate reductase (285 aa).

Belongs to the pyrroline-5-carboxylate reductase family. In terms of assembly, homotetramer.

It carries out the reaction L-proline + NADP(+) = (S)-1-pyrroline-5-carboxylate + NADPH + 2 H(+). It catalyses the reaction L-proline + NAD(+) = (S)-1-pyrroline-5-carboxylate + NADH + 2 H(+). The protein operates within amino-acid biosynthesis; L-proline biosynthesis; L-proline from L-glutamate 5-semialdehyde: step 1/1. This Kluyveromyces lactis (strain ATCC 8585 / CBS 2359 / DSM 70799 / NBRC 1267 / NRRL Y-1140 / WM37) (Yeast) protein is Pyrroline-5-carboxylate reductase.